The sequence spans 119 residues: Fluoride-specific ion channel FluC (119 aa).

Helical transmembrane passes span 5–25 (IIPLSIGAALGATARWLLNLA), 30–50 (LSPATGNLFANWTGAFLIGIF), 59–79 (WKLLLITGFLGSLTTLSGFSL), and 92–112 (SALANIFLHTAGSLLLTWLGL). The Na(+) site is built by Gly69 and Thr72.

It belongs to the fluoride channel Fluc/FEX (TC 1.A.43) family.

It is found in the cell inner membrane. The catalysed reaction is fluoride(in) = fluoride(out). With respect to regulation, na(+) is not transported, but it plays an essential structural role and its presence is essential for fluoride channel function. In terms of biological role, fluoride-specific ion channel. Important for reducing fluoride concentration in the cell, thus reducing its toxicity. The sequence is that of Fluoride-specific ion channel FluC from Neisseria meningitidis serogroup A / serotype 4A (strain DSM 15465 / Z2491).